The primary structure comprises 544 residues: Cannabidiolic acid synthase (544 aa).

The N-terminal stretch at Met-1–Ala-28 is a signal peptide. An intrachain disulfide couples Cys-37 to Cys-99. Asn-45 and Asn-65 each carry an N-linked (GlcNAc...) asparagine glycan. An FAD-binding PCMH-type domain is found at Thr-77–Val-251. Residues Thr-109–Asp-115 and Ser-120 contribute to the FAD site. A cross-link (6-(S-cysteinyl)-8alpha-(pros-histidyl)-FAD (His-Cys)) is located at residues His-114–Cys-176. N-linked (GlcNAc...) asparagine glycosylation occurs at Asn-168. FAD-binding positions include Cys-176, Cys-180–His-184, Tyr-190, Glu-236, and Ile-241. His-291 contacts cannabigerolate. 3 N-linked (GlcNAc...) asparagine glycosylation sites follow: Asn-296, Asn-304, and Asn-328. The cannabigerolate site is built by Tyr-416 and Glu-441. An FAD-binding site is contributed by Tyr-480–Asn-482. Tyr-483 functions as the Proton acceptor in the catalytic mechanism. N-linked (GlcNAc...) asparagine glycosylation occurs at Asn-498.

This sequence belongs to the oxygen-dependent FAD-linked oxidoreductase family. Monomer. The cofactor is FAD. In terms of processing, glycosylated. The FAD cofactor is bound via a bicovalent 6-S-cysteinyl, 8alpha-N1-histidyl FAD linkage. In terms of tissue distribution, expressed in young leaves.

Its subcellular location is the secreted. The protein resides in the extracellular space. The protein localises to the apoplast. The catalysed reaction is cannabigerolate + O2 = cannabidiolate + H2O2. Its pathway is secondary metabolite biosynthesis; terpenoid biosynthesis. Its activity is regulated as follows. Inhibited by Hg(2+). Its function is as follows. Oxidoreductase involved in the biosynthesis of cannabinoids-related terpenophenolic natural products, which have pharmacological activity. Catalyzes the stereoselective oxidative cyclization of the monoterpene moiety in cannabigerolic acid (CBGA), producing cannabidiolate (CBDA), the major cannabioid in fiber-type Cannabis plants. Can also use cannabinerolic acid as substrate, but not cannabigerol or cannabinerol. The polypeptide is Cannabidiolic acid synthase (Cannabis sativa (Hemp)).